Consider the following 284-residue polypeptide: 2-dehydro-3-deoxyphosphooctonate aldolase (284 aa).

Belongs to the KdsA family.

The protein resides in the cytoplasm. The catalysed reaction is D-arabinose 5-phosphate + phosphoenolpyruvate + H2O = 3-deoxy-alpha-D-manno-2-octulosonate-8-phosphate + phosphate. Its pathway is carbohydrate biosynthesis; 3-deoxy-D-manno-octulosonate biosynthesis; 3-deoxy-D-manno-octulosonate from D-ribulose 5-phosphate: step 2/3. It functions in the pathway bacterial outer membrane biogenesis; lipopolysaccharide biosynthesis. The polypeptide is 2-dehydro-3-deoxyphosphooctonate aldolase (Burkholderia cenocepacia (strain ATCC BAA-245 / DSM 16553 / LMG 16656 / NCTC 13227 / J2315 / CF5610) (Burkholderia cepacia (strain J2315))).